Here is a 339-residue protein sequence, read N- to C-terminus: Phenylalanine--tRNA ligase alpha subunit (339 aa).

Glu-254 serves as a coordination point for Mg(2+).

This sequence belongs to the class-II aminoacyl-tRNA synthetase family. Phe-tRNA synthetase alpha subunit type 1 subfamily. Tetramer of two alpha and two beta subunits. It depends on Mg(2+) as a cofactor.

The protein localises to the cytoplasm. It carries out the reaction tRNA(Phe) + L-phenylalanine + ATP = L-phenylalanyl-tRNA(Phe) + AMP + diphosphate + H(+). In Chlamydia pneumoniae (Chlamydophila pneumoniae), this protein is Phenylalanine--tRNA ligase alpha subunit (pheS).